The following is a 418-amino-acid chain: Glutamyl-tRNA reductase (418 aa).

Residues 49 to 52, Ser108, 113 to 115, and Gln119 each bind substrate; these read TCNR and EPQ. The active-site Nucleophile is Cys50. 188–193 is a binding site for NADP(+); the sequence is GAGETI.

It belongs to the glutamyl-tRNA reductase family. As to quaternary structure, homodimer.

It catalyses the reaction (S)-4-amino-5-oxopentanoate + tRNA(Glu) + NADP(+) = L-glutamyl-tRNA(Glu) + NADPH + H(+). It functions in the pathway porphyrin-containing compound metabolism; protoporphyrin-IX biosynthesis; 5-aminolevulinate from L-glutamyl-tRNA(Glu): step 1/2. Catalyzes the NADPH-dependent reduction of glutamyl-tRNA(Glu) to glutamate 1-semialdehyde (GSA). This Aliivibrio fischeri (strain ATCC 700601 / ES114) (Vibrio fischeri) protein is Glutamyl-tRNA reductase.